Here is a 495-residue protein sequence, read N- to C-terminus: Bifunctional protein GlmU (495 aa).

The interval 1–241 is pyrophosphorylase; the sequence is MTFPGDTAVL…SALVAGVNNR (241 aa). UDP-N-acetyl-alpha-D-glucosamine contacts are provided by residues 12–15, lysine 26, glutamine 83, 88–89, 112–114, glycine 151, glutamate 166, asparagine 181, and asparagine 239; these read LAAG, GT, and SGD. Aspartate 114 is a Mg(2+) binding site. Asparagine 239 lines the Mg(2+) pocket. The tract at residues 242–262 is linker; sequence VQLAQLASELNRRVVAAHQLA. The tract at residues 263-495 is N-acetyltransferase; sequence GVTVVDPATT…TQPPDADQTP (233 aa). Arginine 344 and lysine 362 together coordinate UDP-N-acetyl-alpha-D-glucosamine. Histidine 374 serves as the catalytic Proton acceptor. Positions 377 and 388 each coordinate UDP-N-acetyl-alpha-D-glucosamine. Residues alanine 391, 397 to 398, serine 416, and alanine 434 contribute to the acetyl-CoA site; that span reads NY. The segment at 457-495 is disordered; that stretch reads IENWVQRKRPGSPAAQASKRASEMACQQPTQPPDADQTP. Positions 483 to 495 are enriched in low complexity; that stretch reads QQPTQPPDADQTP.

It in the N-terminal section; belongs to the N-acetylglucosamine-1-phosphate uridyltransferase family. The protein in the C-terminal section; belongs to the transferase hexapeptide repeat family. Homotrimer. Mg(2+) serves as cofactor.

It is found in the cytoplasm. The enzyme catalyses alpha-D-glucosamine 1-phosphate + acetyl-CoA = N-acetyl-alpha-D-glucosamine 1-phosphate + CoA + H(+). The catalysed reaction is N-acetyl-alpha-D-glucosamine 1-phosphate + UTP + H(+) = UDP-N-acetyl-alpha-D-glucosamine + diphosphate. The protein operates within nucleotide-sugar biosynthesis; UDP-N-acetyl-alpha-D-glucosamine biosynthesis; N-acetyl-alpha-D-glucosamine 1-phosphate from alpha-D-glucosamine 6-phosphate (route II): step 2/2. It participates in nucleotide-sugar biosynthesis; UDP-N-acetyl-alpha-D-glucosamine biosynthesis; UDP-N-acetyl-alpha-D-glucosamine from N-acetyl-alpha-D-glucosamine 1-phosphate: step 1/1. It functions in the pathway bacterial outer membrane biogenesis; LPS lipid A biosynthesis. In terms of biological role, catalyzes the last two sequential reactions in the de novo biosynthetic pathway for UDP-N-acetylglucosamine (UDP-GlcNAc). The C-terminal domain catalyzes the transfer of acetyl group from acetyl coenzyme A to glucosamine-1-phosphate (GlcN-1-P) to produce N-acetylglucosamine-1-phosphate (GlcNAc-1-P), which is converted into UDP-GlcNAc by the transfer of uridine 5-monophosphate (from uridine 5-triphosphate), a reaction catalyzed by the N-terminal domain. This Mycobacterium bovis (strain ATCC BAA-935 / AF2122/97) protein is Bifunctional protein GlmU.